Consider the following 473-residue polypeptide: Trigger factor (473 aa).

Residues 171–256 form the PPIase FKBP-type domain; sequence GDRVTIDFVG…VTKIQAAGEA (86 aa). The interval 439–473 is disordered; it reads KEALFADEDGDDTTGGKPADKAEAKDESKTEAKAD. Positions 456–473 are enriched in basic and acidic residues; it reads PADKAEAKDESKTEAKAD.

It belongs to the FKBP-type PPIase family. Tig subfamily.

It is found in the cytoplasm. It catalyses the reaction [protein]-peptidylproline (omega=180) = [protein]-peptidylproline (omega=0). Functionally, involved in protein export. Acts as a chaperone by maintaining the newly synthesized protein in an open conformation. Functions as a peptidyl-prolyl cis-trans isomerase. This chain is Trigger factor, found in Methylobacterium radiotolerans (strain ATCC 27329 / DSM 1819 / JCM 2831 / NBRC 15690 / NCIMB 10815 / 0-1).